Here is a 499-residue protein sequence, read N- to C-terminus: Glycerol kinase (499 aa).

Threonine 12 serves as a coordination point for ADP. Residues threonine 12, threonine 13, and serine 14 each coordinate ATP. Threonine 12 contacts sn-glycerol 3-phosphate. ADP is bound at residue arginine 16. Positions 82, 83, 135, and 245 each coordinate sn-glycerol 3-phosphate. Glycerol contacts are provided by arginine 82, glutamate 83, tyrosine 135, aspartate 245, and glutamine 246. ADP is bound by residues threonine 267 and glycine 310. Positions 267, 310, 314, and 411 each coordinate ATP. ADP-binding residues include glycine 411 and asparagine 415.

The protein belongs to the FGGY kinase family. As to quaternary structure, homotetramer and homodimer (in equilibrium).

The catalysed reaction is glycerol + ATP = sn-glycerol 3-phosphate + ADP + H(+). Its pathway is polyol metabolism; glycerol degradation via glycerol kinase pathway; sn-glycerol 3-phosphate from glycerol: step 1/1. Activated by phosphorylation and inhibited by fructose 1,6-bisphosphate (FBP). Key enzyme in the regulation of glycerol uptake and metabolism. Catalyzes the phosphorylation of glycerol to yield sn-glycerol 3-phosphate. The protein is Glycerol kinase of Clostridium beijerinckii (strain ATCC 51743 / NCIMB 8052) (Clostridium acetobutylicum).